The following is a 268-amino-acid chain: 4-hydroxy-tetrahydrodipicolinate reductase (268 aa).

8-13 (GAAGRM) is an NAD(+) binding site. Arg-36 is an NADP(+) binding site. NAD(+)-binding positions include 99-101 (GTT) and 123-126 (AANF). The active-site Proton donor/acceptor is the His-156. Residue His-157 coordinates (S)-2,3,4,5-tetrahydrodipicolinate. The active-site Proton donor is the Lys-160. 166–167 (GT) serves as a coordination point for (S)-2,3,4,5-tetrahydrodipicolinate.

This sequence belongs to the DapB family.

It is found in the cytoplasm. It carries out the reaction (S)-2,3,4,5-tetrahydrodipicolinate + NAD(+) + H2O = (2S,4S)-4-hydroxy-2,3,4,5-tetrahydrodipicolinate + NADH + H(+). It catalyses the reaction (S)-2,3,4,5-tetrahydrodipicolinate + NADP(+) + H2O = (2S,4S)-4-hydroxy-2,3,4,5-tetrahydrodipicolinate + NADPH + H(+). It participates in amino-acid biosynthesis; L-lysine biosynthesis via DAP pathway; (S)-tetrahydrodipicolinate from L-aspartate: step 4/4. In terms of biological role, catalyzes the conversion of 4-hydroxy-tetrahydrodipicolinate (HTPA) to tetrahydrodipicolinate. In Pseudomonas fluorescens (strain Pf0-1), this protein is 4-hydroxy-tetrahydrodipicolinate reductase.